Here is a 92-residue protein sequence, read N- to C-terminus: Conotoxin Im9.4 (92 aa).

The first 20 residues, 1 to 20, serve as a signal peptide directing secretion; it reads MHRSLAGSAVLMLLLLFALG. Residues 21–62 constitute a propeptide that is removed on maturation; sequence NFVGVQPGLVTRDADNGQLMDNRRNLRLERKTMSLFKSLDKR. 3 disulfides stabilise this stretch: Cys-65–Cys-79, Cys-69–Cys-81, and Cys-75–Cys-87. Asn-90 is subject to Asparagine amide.

It belongs to the conotoxin P superfamily. Expressed by the venom duct.

Its subcellular location is the secreted. Probable neurotoxin that inhibits ion channels. This Conus imperialis (Imperial cone) protein is Conotoxin Im9.4.